The chain runs to 227 residues: NAD(P)H-quinone oxidoreductase subunit K, chloroplastic (227 aa).

Residues Cys-43, Cys-44, Cys-108, and Cys-139 each contribute to the [4Fe-4S] cluster site.

It belongs to the complex I 20 kDa subunit family. NDH is composed of at least 16 different subunits, 5 of which are encoded in the nucleus. Requires [4Fe-4S] cluster as cofactor.

The protein resides in the plastid. The protein localises to the chloroplast thylakoid membrane. The catalysed reaction is a plastoquinone + NADH + (n+1) H(+)(in) = a plastoquinol + NAD(+) + n H(+)(out). The enzyme catalyses a plastoquinone + NADPH + (n+1) H(+)(in) = a plastoquinol + NADP(+) + n H(+)(out). Functionally, NDH shuttles electrons from NAD(P)H:plastoquinone, via FMN and iron-sulfur (Fe-S) centers, to quinones in the photosynthetic chain and possibly in a chloroplast respiratory chain. The immediate electron acceptor for the enzyme in this species is believed to be plastoquinone. Couples the redox reaction to proton translocation, and thus conserves the redox energy in a proton gradient. This is NAD(P)H-quinone oxidoreductase subunit K, chloroplastic from Drimys granadensis.